The primary structure comprises 211 residues: Thymidylate kinase (211 aa).

11-18 (GPDGAGKT) serves as a coordination point for ATP.

Belongs to the thymidylate kinase family.

The enzyme catalyses dTMP + ATP = dTDP + ADP. In terms of biological role, phosphorylation of dTMP to form dTDP in both de novo and salvage pathways of dTTP synthesis. The protein is Thymidylate kinase of Streptococcus uberis (strain ATCC BAA-854 / 0140J).